The sequence spans 542 residues: La-related protein 7 homolog (542 aa).

Positions 112 to 239 (VAEELDIKES…KRRFPFNLEQ (128 aa)) constitute an HTH La-type RNA-binding domain. In terms of domain architecture, RRM spans 247–335 (RTLYIDFLPP…GSIRIITYKK (89 aa)). The 169-residue stretch at 374–542 (EIKQNCLIKI…KQNITQNYNK (169 aa)) folds into the xRRM domain.

This sequence belongs to the LARP7 family. In terms of assembly, component of the telomerase holoenzyme complex, composed of the catalytic core (the catalytic subunit TERT, the telomerase RNA template component TER and TAP65/p65), which is associated with two heterotrimeric subcomplexes: (i) the replication protein A (RPA)-related subcomplex, composed of TEB1, RPA2/TEB2 and RPA3/TEB3 and (ii) the CST-like subcomplex, composed of TAP75/p75, TAP45/p45 and TAP19/p19. TEB1 and the CST-like subcomplex are tethered to the catalytic core by TAP50/p50.

The protein resides in the chromosome. Its subcellular location is the telomere. In terms of biological role, RNA-binding protein required for assembly of the holoenzyme telomerase ribonucleoprotein (RNP) complex. Telomerase is an essential ribonucleoprotein enzyme that copies new telomeric repeats onto chromosome ends by repetitively synthesizing the short telomere-repeat sequence 5'-TTGGGG-3' using an RNA template component TER. TAP65/p65 specifically binds telomerase RNA template TER and is required for biogenesis and placement of the TER stem-terminus element: TAP65/p65 first protects the 3'-end of TER from degradation and acts as a chaperone to correctly fold TER for protein binding; it then bends TER stem-loop IV to position it for interaction of stem-loop IV with catalytic TERT RNA-binding domain. The protein is La-related protein 7 homolog of Tetrahymena thermophila (strain SB210).